Consider the following 315-residue polypeptide: Cobalamin biosynthesis protein CobD (315 aa).

The next 5 helical transmembrane spans lie at 48-68, 77-97, 150-170, 200-220, and 295-315; these read IAGF…TLGI, PILG…AKGL, DGII…AFLY, VFNY…SFIL, and MVSF…EVII.

Belongs to the CobD/CbiB family.

It localises to the cell membrane. The protein operates within cofactor biosynthesis; adenosylcobalamin biosynthesis. In terms of biological role, converts cobyric acid to cobinamide by the addition of aminopropanol on the F carboxylic group. The chain is Cobalamin biosynthesis protein CobD from Clostridium perfringens (strain 13 / Type A).